A 276-amino-acid polypeptide reads, in one-letter code: Omega-amidase NIT2-B (276 aa).

Residues 4–248 (FRLSLVQFLV…ETVISADIDL (245 aa)) enclose the CN hydrolase domain. The active-site Proton acceptor is Glu-43. The active-site Proton donor is Lys-112. Catalysis depends on Cys-153, which acts as the Nucleophile.

This sequence belongs to the carbon-nitrogen hydrolase superfamily. NIT1/NIT2 family. Homodimer.

It is found in the cytoplasm. It carries out the reaction 2-oxoglutaramate + H2O = 2-oxoglutarate + NH4(+). It catalyses the reaction 2-oxosuccinamate + H2O = oxaloacetate + NH4(+). Has omega-amidase activity. The role of omega-amidase is to remove potentially toxic intermediates by converting 2-oxoglutaramate and 2-oxosuccinamate to biologically useful 2-oxoglutarate and oxaloacetate, respectively. In Xenopus laevis (African clawed frog), this protein is Omega-amidase NIT2-B (nit2b).